Here is a 240-residue protein sequence, read N- to C-terminus: Arylmalonate decarboxylase (240 aa).

It carries out the reaction 2-aryl-2-methylmalonate + H(+) = 2-arylpropionate + CO2. This is Arylmalonate decarboxylase from Bordetella bronchiseptica (Alcaligenes bronchisepticus).